The sequence spans 105 residues: Small ribosomal subunit protein eS24 (105 aa).

Residues S85 to E105 are disordered. Positions E92–E105 are enriched in acidic residues.

The protein belongs to the eukaryotic ribosomal protein eS24 family.

The chain is Small ribosomal subunit protein eS24 from Methanosphaera stadtmanae (strain ATCC 43021 / DSM 3091 / JCM 11832 / MCB-3).